The primary structure comprises 164 residues: Microfibrillar-associated protein 5 (164 aa).

Positions 1-28 (MLFLGQKALLLVLAISIPSDWLPLGVSG) are cleaved as a signal peptide. The short motif at 30 to 32 (RGD) is the Cell attachment site element. N-linked (GlcNAc...) asparagine glycosylation is present at asparagine 70.

The protein belongs to the MFAP family. Interacts with TGFB2. Interacts with BMP2. Interacts with FBN1 (via N-terminal domain) and FBN2. Forms intermolecular disulfide bonds either with other MAGP-2 molecules or with other components of the microfibrils.

Its subcellular location is the secreted. The protein localises to the extracellular space. It is found in the extracellular matrix. May play a role in hematopoiesis. In the cardiovascular system, could regulate growth factors or participate in cell signaling in maintaining large vessel integrity. Component of the elastin-associated microfibrils. In Mus musculus (Mouse), this protein is Microfibrillar-associated protein 5 (Mfap5).